Here is a 292-residue protein sequence, read N- to C-terminus: Alpha-soluble NSF attachment protein (292 aa).

This sequence belongs to the SNAP family.

Its subcellular location is the cytoplasmic vesicle. It is found in the membrane. Its function is as follows. Required for vesicular transport between the endoplasmic reticulum and the Golgi apparatus. Also between the endosome and phagosome. In Drosophila melanogaster (Fruit fly), this protein is Alpha-soluble NSF attachment protein.